The chain runs to 186 residues: Peptidyl-tRNA hydrolase (186 aa).

Position 14 (tyrosine 14) interacts with tRNA. Histidine 19 acts as the Proton acceptor in catalysis. TRNA-binding residues include tyrosine 61, asparagine 63, and asparagine 107.

The protein belongs to the PTH family. As to quaternary structure, monomer.

Its subcellular location is the cytoplasm. It catalyses the reaction an N-acyl-L-alpha-aminoacyl-tRNA + H2O = an N-acyl-L-amino acid + a tRNA + H(+). Its function is as follows. Hydrolyzes ribosome-free peptidyl-tRNAs (with 1 or more amino acids incorporated), which drop off the ribosome during protein synthesis, or as a result of ribosome stalling. Functionally, catalyzes the release of premature peptidyl moieties from peptidyl-tRNA molecules trapped in stalled 50S ribosomal subunits, and thus maintains levels of free tRNAs and 50S ribosomes. The protein is Peptidyl-tRNA hydrolase of Helicobacter acinonychis (strain Sheeba).